Reading from the N-terminus, the 472-residue chain is Pyruvate kinase (472 aa).

Arginine 33 serves as a coordination point for substrate. 3 residues coordinate K(+): asparagine 35, serine 37, and aspartate 67. 35–38 provides a ligand contact to ATP; it reads NFSH. ATP-binding residues include arginine 74 and lysine 155. Mg(2+) is bound at residue glutamate 220. Substrate contacts are provided by glycine 243, aspartate 244, and threonine 276. Residue aspartate 244 coordinates Mg(2+).

The protein belongs to the pyruvate kinase family. Homotetramer. Requires Mg(2+) as cofactor. The cofactor is K(+).

It carries out the reaction pyruvate + ATP = phosphoenolpyruvate + ADP + H(+). Its pathway is carbohydrate degradation; glycolysis; pyruvate from D-glyceraldehyde 3-phosphate: step 5/5. This Mycobacterium intracellulare protein is Pyruvate kinase (pyk).